Reading from the N-terminus, the 218-residue chain is Carboxylesterase 2 (218 aa).

Active-site charge relay system residues include S114, D168, and H199.

It belongs to the AB hydrolase superfamily. AB hydrolase 2 family. Homodimer.

The enzyme catalyses a carboxylic ester + H2O = an alcohol + a carboxylate + H(+). Its function is as follows. Hydrolyzes carboxylic ester bonds with relatively broad substrate specificity. The chain is Carboxylesterase 2 (estB) from Pseudomonas fluorescens.